We begin with the raw amino-acid sequence, 215 residues long: Protein-L-isoaspartate O-methyltransferase (215 aa).

The active site involves S62.

The protein belongs to the methyltransferase superfamily. L-isoaspartyl/D-aspartyl protein methyltransferase family.

It localises to the cytoplasm. The enzyme catalyses [protein]-L-isoaspartate + S-adenosyl-L-methionine = [protein]-L-isoaspartate alpha-methyl ester + S-adenosyl-L-homocysteine. Catalyzes the methyl esterification of L-isoaspartyl residues in peptides and proteins that result from spontaneous decomposition of normal L-aspartyl and L-asparaginyl residues. It plays a role in the repair and/or degradation of damaged proteins. The chain is Protein-L-isoaspartate O-methyltransferase from Bradyrhizobium sp. (strain BTAi1 / ATCC BAA-1182).